Consider the following 417-residue polypeptide: NADH-quinone oxidoreductase subunit D (417 aa).

Belongs to the complex I 49 kDa subunit family. As to quaternary structure, NDH-1 is composed of 14 different subunits. Subunits NuoB, C, D, E, F, and G constitute the peripheral sector of the complex.

It localises to the cell inner membrane. It catalyses the reaction a quinone + NADH + 5 H(+)(in) = a quinol + NAD(+) + 4 H(+)(out). Functionally, NDH-1 shuttles electrons from NADH, via FMN and iron-sulfur (Fe-S) centers, to quinones in the respiratory chain. The immediate electron acceptor for the enzyme in this species is believed to be ubiquinone. Couples the redox reaction to proton translocation (for every two electrons transferred, four hydrogen ions are translocated across the cytoplasmic membrane), and thus conserves the redox energy in a proton gradient. The protein is NADH-quinone oxidoreductase subunit D of Aromatoleum aromaticum (strain DSM 19018 / LMG 30748 / EbN1) (Azoarcus sp. (strain EbN1)).